The sequence spans 123 residues: PTS system glucitol/sorbitol-specific EIIA component (123 aa).

In terms of domain architecture, PTS EIIA type-5 spans methionine 1–leucine 116. Catalysis depends on histidine 43, which acts as the Tele-phosphohistidine intermediate. Position 43 is a phosphohistidine; by HPr (histidine 43).

Its subcellular location is the cytoplasm. Its function is as follows. The phosphoenolpyruvate-dependent sugar phosphotransferase system (sugar PTS), a major carbohydrate active transport system, catalyzes the phosphorylation of incoming sugar substrates concomitantly with their translocation across the cell membrane. The enzyme II complex composed of SrlA, SrlB and SrlE is involved in glucitol/sorbitol transport. This chain is PTS system glucitol/sorbitol-specific EIIA component (srlB), found in Shigella flexneri.